A 294-amino-acid polypeptide reads, in one-letter code: Ribosomal protein L11 methyltransferase (294 aa).

4 residues coordinate S-adenosyl-L-methionine: T144, G165, D187, and N229.

The protein belongs to the methyltransferase superfamily. PrmA family.

The protein resides in the cytoplasm. It carries out the reaction L-lysyl-[protein] + 3 S-adenosyl-L-methionine = N(6),N(6),N(6)-trimethyl-L-lysyl-[protein] + 3 S-adenosyl-L-homocysteine + 3 H(+). In terms of biological role, methylates ribosomal protein L11. In Cellvibrio japonicus (strain Ueda107) (Pseudomonas fluorescens subsp. cellulosa), this protein is Ribosomal protein L11 methyltransferase.